Consider the following 402-residue polypeptide: Multidrug resistance protein MdtH (402 aa).

The Cytoplasmic segment spans residues 1–12; sequence MSRVSQARNLGK. A helical membrane pass occupies residues 13–33; sequence YFLLIDNMLVVLVFFVVFPLI. The Periplasmic portion of the chain corresponds to 34 to 98; it reads SIRFVDQMGW…GFATMGIAHE (65 aa). Residues 99–116 traverse the membrane as a helical segment; that stretch reads PWLLWFSCFLSGLGGTLF. At 117–138 the chain is on the cytoplasmic side; the sequence is DPPRSALVVKLIRPEQRGRFFS. Residues 139-159 traverse the membrane as a helical segment; sequence LLMMQDSAGAVIGALLGSWLL. The Periplasmic portion of the chain corresponds to 160–164; it reads QYDFR. A helical membrane pass occupies residues 165–185; that stretch reads LVCATGAILFILCALFNAWLL. The Cytoplasmic segment spans residues 186–213; sequence PAWKLSTVRTPVREGMRRVMSDKRFVTY. Residues 214–234 form a helical membrane-spanning segment; sequence VLTLAGYYMLAVQVMLMLPIM. Topologically, residues 235 to 243 are periplasmic; it reads VNDIAGSPA. A helical membrane pass occupies residues 244–264; sequence AVKWMYAIEACLSLTLLYPIA. The Cytoplasmic segment spans residues 265–276; that stretch reads RWSEKRFRLEHR. A helical membrane pass occupies residues 277 to 297; that stretch reads LMAGLLVMSLSMIPIGMVGNL. Topologically, residues 298–299 are periplasmic; that stretch reads QQ. A helical transmembrane segment spans residues 300-320; that stretch reads LFTLICAFYIGSVIAEPARET. Over 321 to 339 the chain is Cytoplasmic; the sequence is LSASLADARARGSYMGFSR. A helical membrane pass occupies residues 340–360; the sequence is LGLAIGGAIGYIGGGWLFDMG. At 361-367 the chain is on the periplasmic side; that stretch reads KALTQPE. Residues 368 to 388 traverse the membrane as a helical segment; it reads LPWMMLGIIGFITFLALGWQF. Residues 389 to 402 lie on the Cytoplasmic side of the membrane; sequence SHKRTPRRMLEPGA.

This sequence belongs to the major facilitator superfamily. DHA1 family. MdtH (TC 2.A.1.2.21) subfamily.

It is found in the cell inner membrane. This chain is Multidrug resistance protein MdtH, found in Salmonella choleraesuis (strain SC-B67).